A 564-amino-acid chain; its full sequence is Large neutral amino acids transporter small subunit 3 (564 aa).

A helical membrane pass occupies residues 20 to 40 (VVENLFFSAVLLGWASLLIML). Asparagine 54 and asparagine 57 each carry an N-linked (GlcNAc...) asparagine glycan. Helical transmembrane passes span 78–98 (LGFT…GILM), 105–124 (PLRL…MALA), 131–151 (LSPL…CLTF), 165–185 (STFM…FPGI), and 191–211 (AGVP…LIFL). 2 positions are modified to phosphoserine: serine 262 and serine 267. Helical transmembrane passes span 303-323 (IFLW…FYMG) and 357-377 (SIFG…GYIM). Residue asparagine 396 is glycosylated (N-linked (GlcNAc...) asparagine). Serine 398 is modified (phosphoserine). 4 helical membrane passes run 424-444 (AINA…ACLI), 451-471 (LLAF…CGGL), 490-510 (LISA…VGPL), and 515-535 (FWVN…PSYL). Asparagine 558 carries an N-linked (GlcNAc...) asparagine glycan.

This sequence belongs to the SLC43A transporter (TC 2.A.1.44) family. Expressed in the kidney cortex as well as liver, pancreas, and skeletal muscle. In kidney expressed in the glomerular tuft (at protein level). Expressed in liver, skeletal muscle and pancreas (at protein level).

The protein resides in the cell membrane. It is found in the apical cell membrane. It localises to the endoplasmic reticulum membrane. It catalyses the reaction D-leucine(in) = D-leucine(out). The enzyme catalyses L-leucine(in) = L-leucine(out). The catalysed reaction is L-isoleucine(in) = L-isoleucine(out). It carries out the reaction L-methionine(in) = L-methionine(out). It catalyses the reaction L-phenylalanine(in) = L-phenylalanine(out). The enzyme catalyses L-valine(in) = L-valine(out). Uniport that mediates the transport of neutral amino acids such as L-leucine, L-isoleucine, L-valine, and L-phenylalanine. The transport activity is sodium ions-independent, electroneutral and mediated by a facilitated diffusion. In Mus musculus (Mouse), this protein is Large neutral amino acids transporter small subunit 3.